We begin with the raw amino-acid sequence, 688 residues long: DNA ligase (688 aa).

NAD(+) contacts are provided by residues 51-55, 100-101, and Glu129; these read DSEYD and SL. Lys131 serves as the catalytic N6-AMP-lysine intermediate. NAD(+)-binding residues include Arg152, Glu189, Lys308, and Lys332. Positions 426, 429, 444, and 450 each coordinate Zn(2+). The BRCT domain occupies 609 to 688; sequence ADEQPLKGQT…DELLALLANS (80 aa).

The protein belongs to the NAD-dependent DNA ligase family. LigA subfamily. Mg(2+) is required as a cofactor. It depends on Mn(2+) as a cofactor.

The catalysed reaction is NAD(+) + (deoxyribonucleotide)n-3'-hydroxyl + 5'-phospho-(deoxyribonucleotide)m = (deoxyribonucleotide)n+m + AMP + beta-nicotinamide D-nucleotide.. DNA ligase that catalyzes the formation of phosphodiester linkages between 5'-phosphoryl and 3'-hydroxyl groups in double-stranded DNA using NAD as a coenzyme and as the energy source for the reaction. It is essential for DNA replication and repair of damaged DNA. This is DNA ligase from Shewanella sp. (strain MR-7).